A 363-amino-acid polypeptide reads, in one-letter code: Flagellar P-ring protein (363 aa).

Residues methionine 1–alanine 20 form the signal peptide.

This sequence belongs to the FlgI family. The basal body constitutes a major portion of the flagellar organelle and consists of four rings (L,P,S, and M) mounted on a central rod.

Its subcellular location is the periplasm. It localises to the bacterial flagellum basal body. Its function is as follows. Assembles around the rod to form the L-ring and probably protects the motor/basal body from shearing forces during rotation. The chain is Flagellar P-ring protein from Shewanella sp. (strain MR-4).